The sequence spans 231 residues: Acyl-protein thioesterase 1 (231 aa).

Residues S121, D178, and H211 each act as charge relay system in the active site.

The protein belongs to the AB hydrolase superfamily. AB hydrolase 2 family.

The protein localises to the cytoplasm. The protein resides in the nucleus. It catalyses the reaction S-hexadecanoyl-L-cysteinyl-[protein] + H2O = L-cysteinyl-[protein] + hexadecanoate + H(+). Its function is as follows. Hydrolyzes fatty acids from S-acylated cysteine residues in proteins with a strong preference for palmitoylated G-alpha proteins over other acyl substrates. Mediates the deacylation of G-alpha proteins such as GPA1 in vivo, but has weak or no activity toward palmitoylated Ras proteins. Has weak lysophospholipase activity in vitro; however such activity may not exist in vivo. This Candida albicans (strain SC5314 / ATCC MYA-2876) (Yeast) protein is Acyl-protein thioesterase 1.